A 698-amino-acid polypeptide reads, in one-letter code: Ubiquitin-like modifier-activating enzyme ATG7 (698 aa).

The FAP motif signature appears at 11-13 (FAP). Lysine 41 is covalently cross-linked (Glycyl lysine isopeptide (Lys-Gly) (interchain with G-Cter in ubiquitin)). Cysteine 567 acts as the Glycyl thioester intermediate in catalysis. Residue serine 693 is modified to Phosphoserine.

The protein belongs to the ATG7 family. Homodimer. Interacts with ATG3; this interaction is essential for the transfer of ATG8-like proteins's thioester from ATG7 to ATG3 and plays a role in the conjugation of ATG12 to ATG5. Interacts with ATG12. Interacts with ATG10. Forms intermediate conjugates with GABARAPL1. Forms intermediate conjugates with ATG8-like proteins such as GABARAP, GABARAPL2 or MAP1LC3A. Interacts with EP300 acetyltransferase. Interacts with FOXO1. Post-translationally, acetylated by EP300. In terms of processing, polyubiquitinated on Lys-41 via 'Lys-63'-linked ubiquitin by TRIM32; this modification positiely regulates ATG8 and ATG12 activating enzyme activity leading to initiation of autophagy under metabolic stress. Widely expressed, especially in kidney, liver, lymph nodes and bone marrow.

The protein localises to the cytoplasm. Its subcellular location is the preautophagosomal structure. E1-like activating enzyme involved in the 2 ubiquitin-like systems required for cytoplasm to vacuole transport (Cvt) and autophagy. Activates ATG12 for its conjugation with ATG5 as well as the ATG8 family proteins for their conjugation with phosphatidylethanolamine. Both systems are needed for the ATG8 association to Cvt vesicles and autophagosomes membranes. Facilitates LC3-I lipidation with phosphatidylethanolamine to form LC3-II which is found on autophagosomal membranes. Required for autophagic death induced by caspase-8 inhibition. Required for mitophagy which contributes to regulate mitochondrial quantity and quality by eliminating the mitochondria to a basal level to fulfill cellular energy requirements and preventing excess ROS production. Modulates p53/TP53 activity to regulate cell cycle and survival during metabolic stress. Also plays a key role in the maintenance of axonal homeostasis, the prevention of axonal degeneration, the maintenance of hematopoietic stem cells, the formation of Paneth cell granules, as well as in adipose differentiation. Plays a role in regulating the liver clock and glucose metabolism by mediating the autophagic degradation of CRY1 (clock repressor) in a time-dependent manner. The sequence is that of Ubiquitin-like modifier-activating enzyme ATG7 from Mus musculus (Mouse).